We begin with the raw amino-acid sequence, 150 residues long: Putative biopolymer transport protein ExbB-like 2 (150 aa).

3 helical membrane-spanning segments follow: residues 5–25, 63–83, and 97–117; these read VDYG…AIAI, APYI…MDLG, and LALA…AIVI.

This sequence belongs to the ExbB/TolQ family.

It localises to the cell inner membrane. In Helicobacter pylori (strain J99 / ATCC 700824) (Campylobacter pylori J99), this protein is Putative biopolymer transport protein ExbB-like 2.